Here is a 165-residue protein sequence, read N- to C-terminus: Phosphopantetheine adenylyltransferase (165 aa).

Serine 9 is a binding site for substrate. ATP is bound by residues 9-10 (SF) and histidine 17. Positions 41, 73, and 87 each coordinate substrate. Residues 88 to 90 (GLR), glutamate 98, and 123 to 129 (FTLLSSS) contribute to the ATP site.

The protein belongs to the bacterial CoaD family. Homohexamer. Mg(2+) serves as cofactor.

The protein localises to the cytoplasm. It catalyses the reaction (R)-4'-phosphopantetheine + ATP + H(+) = 3'-dephospho-CoA + diphosphate. It participates in cofactor biosynthesis; coenzyme A biosynthesis; CoA from (R)-pantothenate: step 4/5. Its function is as follows. Reversibly transfers an adenylyl group from ATP to 4'-phosphopantetheine, yielding dephospho-CoA (dPCoA) and pyrophosphate. The polypeptide is Phosphopantetheine adenylyltransferase (Herpetosiphon aurantiacus (strain ATCC 23779 / DSM 785 / 114-95)).